A 260-amino-acid polypeptide reads, in one-letter code: Transcription factor BEE 1 (260 aa).

The segment at glutamate 118–glutamate 139 is disordered. Residues glutamine 151–leucine 201 enclose the bHLH domain.

It localises to the nucleus. Its function is as follows. Positive regulator of brassinosteroid signaling. In Arabidopsis thaliana (Mouse-ear cress), this protein is Transcription factor BEE 1 (BEE1).